The primary structure comprises 639 residues: DNA primase (639 aa).

The segment at C41–C65 adopts a CHC2-type zinc-finger fold. The 87-residue stretch at H262–P348 folds into the Toprim domain. Positions 268, 319, and 321 each coordinate Mg(2+). Positions R460 to P479 are disordered.

Belongs to the DnaG primase family. Monomer. Interacts with DnaB. The cofactor is Zn(2+). Requires Mg(2+) as cofactor.

The enzyme catalyses ssDNA + n NTP = ssDNA/pppN(pN)n-1 hybrid + (n-1) diphosphate.. Functionally, RNA polymerase that catalyzes the synthesis of short RNA molecules used as primers for DNA polymerase during DNA replication. In Mycobacterium bovis (strain ATCC BAA-935 / AF2122/97), this protein is DNA primase.